The primary structure comprises 426 residues: F-box protein At2g15640 (426 aa).

The F-box domain maps to 1–48; sequence MNPSTITNDLTVEILSRLPAKSVARFHCVSKQWGSIFGSPYFKELFLT.

This is F-box protein At2g15640 from Arabidopsis thaliana (Mouse-ear cress).